A 268-amino-acid polypeptide reads, in one-letter code: Trans-aconitate 2-methyltransferase (268 aa).

It belongs to the methyltransferase superfamily. Tam family.

The protein resides in the cytoplasm. The catalysed reaction is trans-aconitate + S-adenosyl-L-methionine = (E)-3-(methoxycarbonyl)pent-2-enedioate + S-adenosyl-L-homocysteine. In terms of biological role, catalyzes the S-adenosylmethionine monomethyl esterification of trans-aconitate. The sequence is that of Trans-aconitate 2-methyltransferase from Delftia acidovorans (strain DSM 14801 / SPH-1).